A 248-amino-acid chain; its full sequence is Probable septum site-determining protein MinC (248 aa).

Residues proline 115–methionine 144 are disordered. Residues valine 118–arginine 138 show a composition bias toward pro residues.

The protein belongs to the MinC family. In terms of assembly, interacts with MinD and FtsZ.

In terms of biological role, cell division inhibitor that blocks the formation of polar Z ring septums. Rapidly oscillates between the poles of the cell to destabilize FtsZ filaments that have formed before they mature into polar Z rings. Prevents FtsZ polymerization. The protein is Probable septum site-determining protein MinC of Xanthomonas euvesicatoria pv. vesicatoria (strain 85-10) (Xanthomonas campestris pv. vesicatoria).